A 388-amino-acid polypeptide reads, in one-letter code: Cell adhesion molecule 4 (388 aa).

The N-terminal stretch at 1-20 is a signal peptide; that stretch reads MGRARRFQWPLLLLWAAAAG. The Ig-like V-type domain occupies 21 to 119; that stretch reads PGTAQEVQTE…DTHHQIATLT (99 aa). Over 25–324 the chain is Extracellular; that stretch reads QEVQTENVTV…VEAQTSVPYA (300 aa). N31 and N67 each carry an N-linked (GlcNAc...) asparagine glycan. 3 cysteine pairs are disulfide-bonded: C44–C104, C145–C199, and C245–C291. Ig-like C2-type domains follow at residues 124-219 and 224-307; these read PENP…YVLD and PTAR…YVLV. The N-linked (GlcNAc...) asparagine glycan is linked to N286. Residues 325–345 form a helical membrane-spanning segment; sequence IVGGILALLVFLIICVLVGMV. Residues 346–388 lie on the Cytoplasmic side of the membrane; that stretch reads WCSVRQKGSYLTHEASGLDEQGEAREAFLNGSDGHKRKEEFFI. A Phosphoserine modification is found at S361.

It belongs to the nectin family. In terms of assembly, monomer and homodimer. In terms of processing, N-glycosylated.

The protein resides in the membrane. Its function is as follows. Involved in the cell-cell adhesion. Has calcium- and magnesium-independent cell-cell adhesion activity. May have tumor-suppressor activity. This is Cell adhesion molecule 4 (Cadm4) from Rattus norvegicus (Rat).